The following is a 115-amino-acid chain: MRVKKGVKARRRRNRILKLAKGYRGRRKNCYKRANEAVERALDYASRDRMQRKRDFRRLWIVRINAAARTVGLSYSKLIAGLAKAKIGLDRKVLSDMAIADPSGFAAVANIAKAA.

It belongs to the bacterial ribosomal protein bL20 family.

Its function is as follows. Binds directly to 23S ribosomal RNA and is necessary for the in vitro assembly process of the 50S ribosomal subunit. It is not involved in the protein synthesizing functions of that subunit. This Myxococcus xanthus (strain DK1622) protein is Large ribosomal subunit protein bL20.